The primary structure comprises 264 residues: RNA-binding protein pos-1 (264 aa).

Positions 56-82 are disordered; sequence QDKETQNSASQPTSEQSLANRDPCTVP. The segment covering 61-74 has biased composition (polar residues); that stretch reads QNSASQPTSEQSLA. C3H1-type zinc fingers lie at residues 98–126 and 141–169; these read AFKT…HGVH and KYKT…HKIV. Zn(2+) is bound by residues Cys-104, Cys-113, Cys-119, His-123, Cys-147, Cys-156, Cys-162, and His-166.

As to quaternary structure, monomer.

It localises to the cytoplasm. RNA-binding protein that coordinates cell fate specification and differentiation during early embryogenesis. Binds to a consensus pos-1 recognition element (PRE) consisting of the sequence 5'-UA(U 2-3)RGD(N 1-3)G-3', where R is any purine, D is A, G, or U, and N is any base. The PRE motif is found within the 3' untranslated region of many maternal transcripts required for early development. Binds to the 3' untranslated region (UTR) of Notch receptor homolog glp-1, thereby repressing glp-1 translation in the posterior blastomeres in the embryo. Binding to glp-1 3' UTR excludes cell fate regulator gld-1 binding to an overlapping binding site in the glp-1 3' UTR. Binds to the neg-1 3'UTR thereby opposing neg-1 expression and cytoplasmic polyadenylation of the neg-1 mRNA poly(A) tail promoted by gld-2 and gld-3. By inhibiting the cytoplasmic lengthening of neg-1 mRNA, restricts the accumulation of neg-1 protein and promotes endo-mesoderm development in anterior blastomeres. Essential for germline specification. This is RNA-binding protein pos-1 from Caenorhabditis elegans.